We begin with the raw amino-acid sequence, 257 residues long: Isoprenyl transferase 1 (257 aa).

The active site involves Asp-37. Asp-37 is a binding site for Mg(2+). Residues 38 to 41 (GNRR), Trp-42, His-54, and 82 to 84 (STD) each bind substrate. The Proton acceptor role is filled by Asn-85. Residues Phe-86, Arg-88, Arg-206, and 212–214 (RLS) each bind substrate. Residue Glu-225 coordinates Mg(2+).

It belongs to the UPP synthase family. Homodimer. Requires Mg(2+) as cofactor.

Functionally, catalyzes the condensation of isopentenyl diphosphate (IPP) with allylic pyrophosphates generating different type of terpenoids. This Streptomyces avermitilis (strain ATCC 31267 / DSM 46492 / JCM 5070 / NBRC 14893 / NCIMB 12804 / NRRL 8165 / MA-4680) protein is Isoprenyl transferase 1.